The chain runs to 385 residues: Polyketide synthase 4 (385 aa).

Residue Cys157 is part of the active site.

The protein belongs to the thiolase-like superfamily. Chalcone/stilbene synthases family. As to expression, expressed in glandular trichomes.

The protein resides in the cytoplasm. Functionally, polyketide synthase responsible for the biosynthesis of secondary metabolites. The chain is Polyketide synthase 4 (PKSG4) from Cannabis sativa (Hemp).